The sequence spans 37 residues: MKVRVSIKPICDKCKIIKRHGKIRVICENPKHKQVQG.

Belongs to the bacterial ribosomal protein bL36 family.

This Fusobacterium nucleatum subsp. nucleatum (strain ATCC 25586 / DSM 15643 / BCRC 10681 / CIP 101130 / JCM 8532 / KCTC 2640 / LMG 13131 / VPI 4355) protein is Large ribosomal subunit protein bL36 (rpmJ).